Consider the following 114-residue polypeptide: Small ribosomal subunit protein bS6 (114 aa).

This sequence belongs to the bacterial ribosomal protein bS6 family.

Its function is as follows. Binds together with bS18 to 16S ribosomal RNA. The sequence is that of Small ribosomal subunit protein bS6 from Phocaeicola vulgatus (strain ATCC 8482 / DSM 1447 / JCM 5826 / CCUG 4940 / NBRC 14291 / NCTC 11154) (Bacteroides vulgatus).